Consider the following 105-residue polypeptide: Spermatogenesis-associated protein 8 (105 aa).

In terms of tissue distribution, expressed at high levels in adult testis, at moderate levels in sperm and at low levels in fetal testis. Not detected in other tissues.

In Homo sapiens (Human), this protein is Spermatogenesis-associated protein 8 (SPATA8).